Here is a 231-residue protein sequence, read N- to C-terminus: 2-amino-5-formylamino-6-ribosylaminopyrimidin-4(3H)-one 5'-monophosphate deformylase (231 aa).

Fe cation is bound by residues Glu-29, His-31, Asp-40, and His-110.

It belongs to the creatininase superfamily. FAPy deformylase family. As to quaternary structure, homodimer. The cofactor is Fe(2+). Zn(2+) is required as a cofactor.

The enzyme catalyses 2-amino-5-formylamino-6-(5-phospho-D-ribosylamino)pyrimidin-4(3H)-one + H2O = 2,5-diamino-6-(1-D-ribosylamino)pyrimidin-4(3H)-one 5'-phosphate + formate + H(+). The protein operates within cofactor biosynthesis; coenzyme F420 biosynthesis. It functions in the pathway cofactor biosynthesis; riboflavin biosynthesis. In terms of biological role, catalyzes the hydrolysis of the formamide of 2-amino-5-formylamino-6-ribosylamino-4(3H)-pyrimidinone 5'-monophosphate (FAPy) to form 2,5-diamino-6-ribosylamino-4(3H)-pyrimidinone 5'-phosphate (APy). In Methanothermobacter marburgensis (strain ATCC BAA-927 / DSM 2133 / JCM 14651 / NBRC 100331 / OCM 82 / Marburg) (Methanobacterium thermoautotrophicum), this protein is 2-amino-5-formylamino-6-ribosylaminopyrimidin-4(3H)-one 5'-monophosphate deformylase.